We begin with the raw amino-acid sequence, 227 residues long: Cytochrome c oxidase subunit 2 (227 aa).

At 1–14 (MAYPVQLGFQDAAS) the chain is on the mitochondrial intermembrane side. The helical transmembrane segment at 15 to 45 (PIMEELLYFHDHTLMIMFLISSLVLYIISLM) threads the bilayer. Residues 46–59 (LTTELMHTNTMDAQ) are Mitochondrial matrix-facing. A helical transmembrane segment spans residues 60–87 (EVETVWTILPAAILILIALPSLRILYMM). Residues 88 to 227 (DEITTPSLTL…HFEEWLLSML (140 aa)) lie on the Mitochondrial intermembrane side of the membrane. 6 residues coordinate Cu cation: H161, C196, E198, C200, H204, and M207. E198 lines the Mg(2+) pocket.

The protein belongs to the cytochrome c oxidase subunit 2 family. As to quaternary structure, component of the cytochrome c oxidase (complex IV, CIV), a multisubunit enzyme composed of 14 subunits. The complex is composed of a catalytic core of 3 subunits MT-CO1, MT-CO2 and MT-CO3, encoded in the mitochondrial DNA, and 11 supernumerary subunits COX4I, COX5A, COX5B, COX6A, COX6B, COX6C, COX7A, COX7B, COX7C, COX8 and NDUFA4, which are encoded in the nuclear genome. The complex exists as a monomer or a dimer and forms supercomplexes (SCs) in the inner mitochondrial membrane with NADH-ubiquinone oxidoreductase (complex I, CI) and ubiquinol-cytochrome c oxidoreductase (cytochrome b-c1 complex, complex III, CIII), resulting in different assemblies (supercomplex SCI(1)III(2)IV(1) and megacomplex MCI(2)III(2)IV(2)). Found in a complex with TMEM177, COA6, COX18, COX20, SCO1 and SCO2. Interacts with TMEM177 in a COX20-dependent manner. Interacts with COX20. Interacts with COX16. Cu cation is required as a cofactor.

The protein localises to the mitochondrion inner membrane. The enzyme catalyses 4 Fe(II)-[cytochrome c] + O2 + 8 H(+)(in) = 4 Fe(III)-[cytochrome c] + 2 H2O + 4 H(+)(out). Its function is as follows. Component of the cytochrome c oxidase, the last enzyme in the mitochondrial electron transport chain which drives oxidative phosphorylation. The respiratory chain contains 3 multisubunit complexes succinate dehydrogenase (complex II, CII), ubiquinol-cytochrome c oxidoreductase (cytochrome b-c1 complex, complex III, CIII) and cytochrome c oxidase (complex IV, CIV), that cooperate to transfer electrons derived from NADH and succinate to molecular oxygen, creating an electrochemical gradient over the inner membrane that drives transmembrane transport and the ATP synthase. Cytochrome c oxidase is the component of the respiratory chain that catalyzes the reduction of oxygen to water. Electrons originating from reduced cytochrome c in the intermembrane space (IMS) are transferred via the dinuclear copper A center (CU(A)) of subunit 2 and heme A of subunit 1 to the active site in subunit 1, a binuclear center (BNC) formed by heme A3 and copper B (CU(B)). The BNC reduces molecular oxygen to 2 water molecules using 4 electrons from cytochrome c in the IMS and 4 protons from the mitochondrial matrix. This chain is Cytochrome c oxidase subunit 2 (MT-CO2), found in Hapalemur griseus (Gray gentle lemur).